The sequence spans 739 residues: Nucleoprotein (739 aa).

The oligomerization, N-terminal arm stretch occupies residues 1 to 25 (MDSRPQKIWMAPSLTESDMDYHKIL). An NP core region spans residues 26–405 (TAGLSVQQGI…TLRKERLAKL (380 aa)). Residues 415–647 (PKTSGHYDDD…DSDNTQSEHS (233 aa)) are disordered. Low complexity-rich tracts occupy residues 449 to 458 (SQDTTIPDVV) and 504 to 514 (KGGQQKNSQKG). The Host PPP2R5C-binding motif signature appears at 562–567 (LTPINE). Over residues 567-579 (EEADPLDDADDET) the composition is skewed to acidic residues. The short motif at 606-611 (PPAPVY) is the VP30-binding motif element. Positions 611-638 (YRDHSEKKELPQDEQQDQDHTQEARNQD) are enriched in basic and acidic residues.

It belongs to the filoviruses nucleoprotein family. In terms of assembly, homooligomer. Homomultimerizes to form the nucleocapsid. Binds to viral genomic RNA. Interacts with VP35 and VP30 to form the nucleocapsid. Interacts with host PPP2R5C; this interaction leads to VP30 dephosphorylation and viral transcription. Interacts with VP24; this interaction facilitates nucleocapsid assembly and genome packaging. Interacts with matrix protein VP40; this interaction allows recruitment of the nucleocapsid into progeny virions. Interacts with host STAU1. Interacts with host NXF1 (via RNA-binding domain); this interaction recruits NXF1 to the inclusion bodies were viral replication takes place, probably to export viral mRNA-NXF1 complexes from these sites. Interacts with host CCDC92; this interaction sequesters NP in the host cytoplasm. Interacts with host TRIM14. Post-translationally, phosphorylated by host. O-glycosylated by host. In terms of processing, acetylated by host EP300 in vitro.

Its subcellular location is the virion. It localises to the host cytoplasm. In terms of biological role, oligomerizes into helical capsid to encapsidate the viral genome, protecting it from nucleases and the cellular innate immune response. VP35 binds to and stabilizes monomeric NP, keeping it soluble. Upon virus replication, NP is recruited to bind cooperatively viral genomic RNA and VP35 is released. The encapsidated genomic RNA is termed the nucleocapsid and serves as template for transcription and replication. The nucleocapsid is helical with a pitch of 10.81 NP per turn and a diameter of about 22nm. Each NP binds to six nucleotides of viral genomic RNA, three being exposed to the solvant and three hidden into the nucleocapsid. Also recruits host PPP2R5C phosphatase to dephosphorylate VP30 and thereby promote viral transcription. Upon virion assembly and budding, NP binds to VP24 and possibly host STAU1. The chain is Nucleoprotein (NP) from Epomops franqueti (Franquet's epauletted fruit bat).